A 40-amino-acid polypeptide reads, in one-letter code: Photosystem II reaction center protein J (40 aa).

A helical membrane pass occupies residues 8-28; that stretch reads IPLWLVGTVTGTLVIGLMGIF.

It belongs to the PsbJ family. In terms of assembly, PSII is composed of 1 copy each of membrane proteins PsbA, PsbB, PsbC, PsbD, PsbE, PsbF, PsbH, PsbI, PsbJ, PsbK, PsbL, PsbM, PsbT, PsbX, PsbY, PsbZ, Psb30/Ycf12, at least 3 peripheral proteins of the oxygen-evolving complex and a large number of cofactors. It forms dimeric complexes.

The protein resides in the plastid. Its subcellular location is the chloroplast thylakoid membrane. One of the components of the core complex of photosystem II (PSII). PSII is a light-driven water:plastoquinone oxidoreductase that uses light energy to abstract electrons from H(2)O, generating O(2) and a proton gradient subsequently used for ATP formation. It consists of a core antenna complex that captures photons, and an electron transfer chain that converts photonic excitation into a charge separation. This chain is Photosystem II reaction center protein J, found in Psilotum nudum (Whisk fern).